Consider the following 174-residue polypeptide: Mytilin-3 (174 aa).

The signal sequence occupies residues 1-16; sequence MLKGIILIVTIQLVNA.

Component of the organic matrix of calcified shell layers like nacre and prisms.

It localises to the secreted. This is Mytilin-3 from Mytilus californianus (California mussel).